The following is a 215-amino-acid chain: Recombination protein RecR (215 aa).

The segment at 74 to 89 (CQRCGHLSADPICDIC) adopts a C4-type zinc-finger fold. Residues 97–191 (GVICVVADSR…RVTRIAYGLP (95 aa)) enclose the Toprim domain.

Belongs to the RecR family.

Its function is as follows. May play a role in DNA repair. It seems to be involved in an RecBC-independent recombinational process of DNA repair. It may act with RecF and RecO. This Synechococcus sp. (strain RCC307) protein is Recombination protein RecR.